A 313-amino-acid polypeptide reads, in one-letter code: WUSCHEL-related homeobox 5 (313 aa).

Positions 1 to 32 (METTTTTLGGGGGGRAGGFSDPPSPLSPPLSP) are disordered. The segment covering 8–17 (LGGGGGGRAG) has biased composition (gly residues). Over residues 22–31 (PPSPLSPPLS) the composition is skewed to pro residues. Positions 40–104 (LANARWTPTK…NHKARQRQKQ (65 aa)) form a DNA-binding region, homeobox; WUS-type. Disordered stretches follow at residues 224–247 (AAGRGAAEAEGHGRRGGGAGGRET) and 271–313 (CAAV…SGGR). Over residues 271 to 301 (CAAVSPTTPSASASFSWESESSDSPSSEAPP) the composition is skewed to low complexity.

It belongs to the WUS homeobox family.

It is found in the nucleus. In terms of biological role, transcription factor which may be involved in developmental processes. The sequence is that of WUSCHEL-related homeobox 5 (WOX5) from Oryza sativa subsp. japonica (Rice).